The following is a 95-amino-acid chain: Neutrophil antibiotic peptide NP-4 (95 aa).

The N-terminal stretch at 1–19 (MRTLALLAAILLVTLQAQA) is a signal peptide. The propeptide occupies 20–62 (ELHSGMADDGVDQQQPRAQDLDVAVYIKQDETSPLEVLGAKAG). 3 disulfide bridges follow: cysteine 65/cysteine 93, cysteine 67/cysteine 82, and cysteine 72/cysteine 92.

This sequence belongs to the alpha-defensin family.

Its subcellular location is the secreted. Microbicidal activity. In Oryctolagus cuniculus (Rabbit), this protein is Neutrophil antibiotic peptide NP-4.